Consider the following 77-residue polypeptide: Acyl carrier protein (77 aa).

The region spanning 2–77 is the Carrier domain; the sequence is SDVAEKVKKI…DAIAYIEEKK (76 aa). S37 is subject to O-(pantetheine 4'-phosphoryl)serine.

This sequence belongs to the acyl carrier protein (ACP) family. In terms of processing, 4'-phosphopantetheine is transferred from CoA to a specific serine of apo-ACP by AcpS. This modification is essential for activity because fatty acids are bound in thioester linkage to the sulfhydryl of the prosthetic group.

Its subcellular location is the cytoplasm. It functions in the pathway lipid metabolism; fatty acid biosynthesis. Functionally, carrier of the growing fatty acid chain in fatty acid biosynthesis. The protein is Acyl carrier protein of Desulfovibrio desulfuricans (strain ATCC 27774 / DSM 6949 / MB).